A 161-amino-acid chain; its full sequence is Nucleotide-binding protein Vapar_3769 (161 aa).

It belongs to the YajQ family.

Its function is as follows. Nucleotide-binding protein. This Variovorax paradoxus (strain S110) protein is Nucleotide-binding protein Vapar_3769.